The following is a 159-amino-acid chain: Putative transcriptional regulatory protein rrnAC0199 (159 aa).

This sequence belongs to the Tfx family.

In terms of biological role, putative transcriptional regulator. The protein is Putative transcriptional regulatory protein rrnAC0199 of Haloarcula marismortui (strain ATCC 43049 / DSM 3752 / JCM 8966 / VKM B-1809) (Halobacterium marismortui).